The sequence spans 209 residues: Orotate phosphoribosyltransferase (209 aa).

Residues R96, K100, H102, and 122–130 (EDLISTGGS) each bind 5-phospho-alpha-D-ribose 1-diphosphate. S126 lines the orotate pocket.

Belongs to the purine/pyrimidine phosphoribosyltransferase family. PyrE subfamily. In terms of assembly, homodimer. Mg(2+) is required as a cofactor.

The catalysed reaction is orotidine 5'-phosphate + diphosphate = orotate + 5-phospho-alpha-D-ribose 1-diphosphate. Its pathway is pyrimidine metabolism; UMP biosynthesis via de novo pathway; UMP from orotate: step 1/2. Functionally, catalyzes the transfer of a ribosyl phosphate group from 5-phosphoribose 1-diphosphate to orotate, leading to the formation of orotidine monophosphate (OMP). The sequence is that of Orotate phosphoribosyltransferase from Streptococcus agalactiae serotype III (strain NEM316).